A 289-amino-acid chain; its full sequence is ATP synthase gamma chain (289 aa).

It belongs to the ATPase gamma chain family. In terms of assembly, F-type ATPases have 2 components, CF(1) - the catalytic core - and CF(0) - the membrane proton channel. CF(1) has five subunits: alpha(3), beta(3), gamma(1), delta(1), epsilon(1). CF(0) has three main subunits: a, b and c.

The protein resides in the cell membrane. Produces ATP from ADP in the presence of a proton gradient across the membrane. The gamma chain is believed to be important in regulating ATPase activity and the flow of protons through the CF(0) complex. The sequence is that of ATP synthase gamma chain from Mycoplasmopsis synoviae (strain 53) (Mycoplasma synoviae).